The chain runs to 181 residues: NADH-quinone oxidoreductase subunit B (181 aa).

Residues cysteine 45, cysteine 46, cysteine 111, and cysteine 140 each coordinate [4Fe-4S] cluster.

It belongs to the complex I 20 kDa subunit family. As to quaternary structure, NDH-1 is composed of 15 different subunits. Subunits NuoB, C, D, E, F, and G constitute the peripheral sector of the complex. The cofactor is [4Fe-4S] cluster.

The protein localises to the cell membrane. The enzyme catalyses a quinone + NADH + 5 H(+)(in) = a quinol + NAD(+) + 4 H(+)(out). In terms of biological role, NDH-1 shuttles electrons from NADH, via FMN and iron-sulfur (Fe-S) centers, to quinones in the respiratory chain. The immediate electron acceptor for the enzyme in this species is believed to be a menaquinone. Couples the redox reaction to proton translocation (for every two electrons transferred, four hydrogen ions are translocated across the cytoplasmic membrane), and thus conserves the redox energy in a proton gradient. The chain is NADH-quinone oxidoreductase subunit B from Deinococcus radiodurans (strain ATCC 13939 / DSM 20539 / JCM 16871 / CCUG 27074 / LMG 4051 / NBRC 15346 / NCIMB 9279 / VKM B-1422 / R1).